The sequence spans 202 residues: Solute carrier family 66 member 3 (202 aa).

The first 19 residues, 1 to 19 (MEAGLLWFCNWSTLGVCAA), serve as a signal peptide directing secretion. 4 consecutive transmembrane segments (helical) span residues 33–53 (SARG…LVFL), 64–84 (LTYL…LFVF), 94–114 (LPYM…KWII), and 171–191 (LTIL…TATV).

Its subcellular location is the membrane. The sequence is that of Solute carrier family 66 member 3 (Slc66a3) from Mus musculus (Mouse).